We begin with the raw amino-acid sequence, 207 residues long: Large ribosomal subunit protein uL4 (207 aa).

Positions 49-77 (HAVKNRSAVRGGGKKPWRQKGTGRARQGS) are disordered. The span at 60-71 (GGKKPWRQKGTG) shows a compositional bias: basic residues.

The protein belongs to the universal ribosomal protein uL4 family. Part of the 50S ribosomal subunit.

One of the primary rRNA binding proteins, this protein initially binds near the 5'-end of the 23S rRNA. It is important during the early stages of 50S assembly. It makes multiple contacts with different domains of the 23S rRNA in the assembled 50S subunit and ribosome. Functionally, forms part of the polypeptide exit tunnel. The sequence is that of Large ribosomal subunit protein uL4 from Levilactobacillus brevis (strain ATCC 367 / BCRC 12310 / CIP 105137 / JCM 1170 / LMG 11437 / NCIMB 947 / NCTC 947) (Lactobacillus brevis).